We begin with the raw amino-acid sequence, 419 residues long: Metacaspase-1A (419 aa).

A disordered region spans residues 1-89 (MHHQQSSYGG…PPDQPVSFGQ (89 aa)). Residues 41-51 (NGYNSPQQNYG) are compositionally biased toward polar residues. The span at 59 to 71 (YQQQSAYQNSYNQ) shows a compositional bias: low complexity. Catalysis depends on residues His190 and Cys246.

This sequence belongs to the peptidase C14B family.

In terms of biological role, involved in cell death (apoptosis). This chain is Metacaspase-1A (casA), found in Aspergillus oryzae (strain ATCC 42149 / RIB 40) (Yellow koji mold).